A 554-amino-acid polypeptide reads, in one-letter code: Putative F-box/LRR-repeat protein 8 (554 aa).

An F-box domain is found at 71-117; that stretch reads YDYISNLPDECLSLIFQSLTCADLKRCSLVCRRWLTIEGQCRHRLSL. LRR repeat units lie at residues 119–144, 148–173, 174–199, 205–224, 250–275, 301–325, 326–351, 354–379, 383–404, 405–428, 430–455, and 456–480; these read AQSDLISVIPSLFTRFDSVTKLVLRS, SLGICDNAFVMISVRCRNLTRLKLRG, CPEISDLGIIGFTENCRSLKKVSFGS, KGMNALLNTCLGLEELSVKR, KELHNGQCFAPLLSGAKGLRILKIFR, RIQMSDLGLTALSKCSGVEVLHLVK, TPDCTNVGLALVAERCKLLRKLHIDG, TNRIGDEGLIVVAKYCWNLQELVLIG, TKLSLEAIVSNCLNLERLALCG, SDTVGDTELCCIAEKCLALRKLCI, NCPITDDGIKALGNGCPNLLKVKVKK, and CRGVTTQGADLLRKRRALLVVNLDA.

The protein is Putative F-box/LRR-repeat protein 8 (FBL8) of Arabidopsis thaliana (Mouse-ear cress).